Consider the following 710-residue polypeptide: Polyribonucleotide nucleotidyltransferase (710 aa).

2 residues coordinate Mg(2+): Asp-491 and Asp-497. Residues 558 to 618 (PRIYKIQVKP…SAAQKAIEII (61 aa)) form the KH domain. The S1 motif domain maps to 628-696 (GRIYMGKVTR…ELGRVRLSRK (69 aa)).

It belongs to the polyribonucleotide nucleotidyltransferase family. Mg(2+) serves as cofactor.

The protein resides in the cytoplasm. It catalyses the reaction RNA(n+1) + phosphate = RNA(n) + a ribonucleoside 5'-diphosphate. Functionally, involved in mRNA degradation. Catalyzes the phosphorolysis of single-stranded polyribonucleotides processively in the 3'- to 5'-direction. In Thermodesulfovibrio yellowstonii (strain ATCC 51303 / DSM 11347 / YP87), this protein is Polyribonucleotide nucleotidyltransferase.